The sequence spans 255 residues: Poxin (255 aa).

Belongs to the poxin family. Highly divergent.

It catalyses the reaction 2',3'-cGAMP + H2O = Gp(2'-5')Ap(3') + H(+). Functionally, nuclease that cleaves 2',3'-cGAMP. The polypeptide is Poxin (Bombyx mori (Silk moth)).